The following is a 168-amino-acid chain: Phosphopantetheine adenylyltransferase (168 aa).

Serine 9 lines the substrate pocket. ATP-binding positions include 9 to 10 and histidine 17; that span reads SF. Substrate-binding residues include lysine 41, leucine 73, and arginine 87. Residues 88 to 90, glutamate 98, and 123 to 129 contribute to the ATP site; these read GMR and WIYTSSS.

This sequence belongs to the bacterial CoaD family. Homohexamer. Mg(2+) serves as cofactor.

The protein resides in the cytoplasm. It carries out the reaction (R)-4'-phosphopantetheine + ATP + H(+) = 3'-dephospho-CoA + diphosphate. It functions in the pathway cofactor biosynthesis; coenzyme A biosynthesis; CoA from (R)-pantothenate: step 4/5. Its function is as follows. Reversibly transfers an adenylyl group from ATP to 4'-phosphopantetheine, yielding dephospho-CoA (dPCoA) and pyrophosphate. The protein is Phosphopantetheine adenylyltransferase of Desulfosudis oleivorans (strain DSM 6200 / JCM 39069 / Hxd3) (Desulfococcus oleovorans).